Here is a 184-residue protein sequence, read N- to C-terminus: Elongation factor P (184 aa).

It belongs to the elongation factor P family.

Its subcellular location is the cytoplasm. It participates in protein biosynthesis; polypeptide chain elongation. Its function is as follows. Involved in peptide bond synthesis. Stimulates efficient translation and peptide-bond synthesis on native or reconstituted 70S ribosomes in vitro. Probably functions indirectly by altering the affinity of the ribosome for aminoacyl-tRNA, thus increasing their reactivity as acceptors for peptidyl transferase. This Thermus thermophilus (strain ATCC BAA-163 / DSM 7039 / HB27) protein is Elongation factor P.